The primary structure comprises 469 residues: UDP-N-acetylmuramate--L-alanine ligase (469 aa).

Residue 113–119 (GTHGKTT) participates in ATP binding.

This sequence belongs to the MurCDEF family.

It is found in the cytoplasm. It carries out the reaction UDP-N-acetyl-alpha-D-muramate + L-alanine + ATP = UDP-N-acetyl-alpha-D-muramoyl-L-alanine + ADP + phosphate + H(+). It functions in the pathway cell wall biogenesis; peptidoglycan biosynthesis. Functionally, cell wall formation. This Neisseria meningitidis serogroup B (strain ATCC BAA-335 / MC58) protein is UDP-N-acetylmuramate--L-alanine ligase.